The following is a 144-amino-acid chain: 6,7-dimethyl-8-ribityllumazine synthase (144 aa).

5-amino-6-(D-ribitylamino)uracil contacts are provided by residues phenylalanine 21, 56 to 58, and 80 to 82; these read AYE and AVI. 85–86 is a binding site for (2S)-2-hydroxy-3-oxobutyl phosphate; sequence GT. Histidine 88 functions as the Proton donor in the catalytic mechanism. A 5-amino-6-(D-ribitylamino)uracil-binding site is contributed by phenylalanine 113. Residue arginine 127 coordinates (2S)-2-hydroxy-3-oxobutyl phosphate.

This sequence belongs to the DMRL synthase family. As to quaternary structure, forms an icosahedral capsid composed of 60 subunits, arranged as a dodecamer of pentamers.

The catalysed reaction is (2S)-2-hydroxy-3-oxobutyl phosphate + 5-amino-6-(D-ribitylamino)uracil = 6,7-dimethyl-8-(1-D-ribityl)lumazine + phosphate + 2 H2O + H(+). The protein operates within cofactor biosynthesis; riboflavin biosynthesis; riboflavin from 2-hydroxy-3-oxobutyl phosphate and 5-amino-6-(D-ribitylamino)uracil: step 1/2. Functionally, catalyzes the formation of 6,7-dimethyl-8-ribityllumazine by condensation of 5-amino-6-(D-ribitylamino)uracil with 3,4-dihydroxy-2-butanone 4-phosphate. This is the penultimate step in the biosynthesis of riboflavin. This is 6,7-dimethyl-8-ribityllumazine synthase (ribH) from Photobacterium leiognathi.